Here is a 359-residue protein sequence, read N- to C-terminus: NAC transcription factor 47 (359 aa).

One can recognise an NAC domain in the interval Leu-10 to Lys-186. A DNA-binding region spans residues Ile-112–Ser-192. Disordered regions lie at residues Lys-147 to Arg-166 and Thr-200 to Asp-226. Residues Arg-148–Asp-165 are compositionally biased toward polar residues.

The protein resides in the nucleus. Its function is as follows. Transcription factor that binds to the promoter of ACO5, an ACC oxidase involved in ethylene biosynthesis. Mediates waterlogging-induced hyponastic leaf movement, and cell expansion in abaxial cells of the basal petiole region, by directly regulating the expression of ACO5. Required for normal seed development and morphology. The chain is NAC transcription factor 47 from Arabidopsis thaliana (Mouse-ear cress).